Consider the following 112-residue polypeptide: Large ribosomal subunit protein uL18 (112 aa).

This sequence belongs to the universal ribosomal protein uL18 family. As to quaternary structure, part of the 50S ribosomal subunit; part of the 5S rRNA/L5/L18/L25 subcomplex. Contacts the 5S and 23S rRNAs.

Its function is as follows. This is one of the proteins that bind and probably mediate the attachment of the 5S RNA into the large ribosomal subunit, where it forms part of the central protuberance. This is Large ribosomal subunit protein uL18 from Deinococcus deserti (strain DSM 17065 / CIP 109153 / LMG 22923 / VCD115).